A 365-amino-acid polypeptide reads, in one-letter code: tRNA(Met) cytidine acetate ligase (365 aa).

ATP-binding positions include isoleucine 7–leucine 20, glycine 96, asparagine 152, and arginine 175.

Belongs to the TmcAL family.

Its subcellular location is the cytoplasm. It carries out the reaction cytidine(34) in elongator tRNA(Met) + acetate + ATP = N(4)-acetylcytidine(34) in elongator tRNA(Met) + AMP + diphosphate. Functionally, catalyzes the formation of N(4)-acetylcytidine (ac(4)C) at the wobble position of elongator tRNA(Met), using acetate and ATP as substrates. First activates an acetate ion to form acetyladenylate (Ac-AMP) and then transfers the acetyl group to tRNA to form ac(4)C34. The polypeptide is tRNA(Met) cytidine acetate ligase (Streptococcus pneumoniae (strain ATCC BAA-255 / R6)).